The sequence spans 223 residues: Killer cell lectin-like receptor subfamily B member 1B allele A (223 aa).

Topologically, residues 1–43 are cytoplasmic; that stretch reads MDSTTLVYADLNLARIQEPKHDSPPSLSPDTCRCPRWHRLALK. The ITIM motif signature appears at 6–11; that stretch reads LVYADL. The short motif at 32-35 is the LCK-binding motif element; sequence CRCP. A helical; Signal-anchor for type II membrane protein transmembrane segment spans residues 44–63; the sequence is FGCAGLILLVLVVIGLCVLV. Residues 64–223 lie on the Extracellular side of the membrane; that stretch reads LSVQKSSVQK…LNHETPSNDS (160 aa). Residues 93 to 212 enclose the C-type lectin domain; the sequence is ECPQDWLSHR…STDNRWICQK (120 aa). Intrachain disulfides connect Cys122–Cys210 and Cys189–Cys202.

As to quaternary structure, homodimer; disulfide-linked. Interacts with tyrosine kinase LCK. Binds PTPN6/SHP-1 in a phosphorylation-dependent manner. As to expression, expressed in NK cells and a subset of T-cells.

The protein localises to the membrane. Its function is as follows. Receptor for CLEC2D/OCIL. Ligand-binding contributes to inhibition of cytotoxic natural killer (NK) cells. May mediate MHC class I-independent 'missing-self' recognition of allografts, tumor cells and virus-infected cells. This Mus musculus (Mouse) protein is Killer cell lectin-like receptor subfamily B member 1B allele A (Klrb1b).